Reading from the N-terminus, the 150-residue chain is Deoxyuridine 5'-triphosphate nucleotidohydrolase (150 aa).

Residues arginine 69–glycine 71, asparagine 82, leucine 86–aspartate 88, and methionine 96 contribute to the substrate site.

Belongs to the dUTPase family. It depends on Mg(2+) as a cofactor.

It catalyses the reaction dUTP + H2O = dUMP + diphosphate + H(+). Its pathway is pyrimidine metabolism; dUMP biosynthesis; dUMP from dCTP (dUTP route): step 2/2. This enzyme is involved in nucleotide metabolism: it produces dUMP, the immediate precursor of thymidine nucleotides and it decreases the intracellular concentration of dUTP so that uracil cannot be incorporated into DNA. The polypeptide is Deoxyuridine 5'-triphosphate nucleotidohydrolase (Acinetobacter baylyi (strain ATCC 33305 / BD413 / ADP1)).